Here is a 388-residue protein sequence, read N- to C-terminus: Nocturnin (388 aa).

E152 contacts Mg(2+). Residues E152, 176 to 178, N220, 243 to 246, 281 to 283, and H371 contribute to the substrate site; these read KPW, HLKA, and DFN.

It belongs to the CCR4/nocturin family. Mg(2+) is required as a cofactor. As to expression, expressed only in the photoreceptors of the retina. Expression is controlled by the retinal circadian clock.

It is found in the cytoplasm. Its subcellular location is the nucleus. The protein localises to the perinuclear region. The protein resides in the mitochondrion. The enzyme catalyses NADP(+) + H2O = phosphate + NAD(+). It carries out the reaction NADPH + H2O = phosphate + NADH. In terms of biological role, phosphatase which catalyzes the conversion of NADP(+) to NAD(+) and of NADPH to NADH. Shows a small preference for NADPH over NADP(+). Component of the circadian clock or downstream effector of clock function. Exhibits a high amplitude circadian rhythm with maximal levels in early evening. In constant darkness or constant light, the amplitude of the rhythm decreases. The sequence is that of Nocturnin from Xenopus laevis (African clawed frog).